The primary structure comprises 562 residues: Arginine--tRNA ligase (562 aa).

Positions 129-139 match the 'HIGH' region motif; it reads ANPTGPLHVGH.

Belongs to the class-I aminoacyl-tRNA synthetase family. In terms of assembly, monomer.

It localises to the cytoplasm. It catalyses the reaction tRNA(Arg) + L-arginine + ATP = L-arginyl-tRNA(Arg) + AMP + diphosphate. This is Arginine--tRNA ligase from Xanthomonas axonopodis pv. citri (strain 306).